Consider the following 142-residue polypeptide: ATP synthase epsilon chain (142 aa).

It belongs to the ATPase epsilon chain family. As to quaternary structure, F-type ATPases have 2 components, CF(1) - the catalytic core - and CF(0) - the membrane proton channel. CF(1) has five subunits: alpha(3), beta(3), gamma(1), delta(1), epsilon(1). CF(0) has three main subunits: a, b and c.

It localises to the cell inner membrane. Its function is as follows. Produces ATP from ADP in the presence of a proton gradient across the membrane. The sequence is that of ATP synthase epsilon chain from Histophilus somni (strain 129Pt) (Haemophilus somnus).